We begin with the raw amino-acid sequence, 274 residues long: NAD(P)H dehydrogenase [quinone] 1 (274 aa).

Residues H12, 18-19 (FN), and Q67 each bind FAD. S82 is modified (phosphoserine). Residue 104 to 107 (LQWF) coordinates FAD. 126–128 (AYT) serves as a coordination point for substrate. Residues 148–151 (TTGG), Y156, and R201 each bind FAD. The interval 225 to 274 (PSSLFDLNFQAGFLMKKEVQDEEKNKKFGLSVGHHLGKSIPTDNQIKARK) is important for apoenzyme conformational stability. Residues K250 and K251 each participate in a glycyl lysine isopeptide (Lys-Gly) (interchain with G-Cter in SUMO2) cross-link.

Belongs to the NAD(P)H dehydrogenase (quinone) family. Homodimer. Interacts with PDLIM4 isoform 2; this interaction stabilizes PDLIM4 isoform 2 in response to oxidative stress and protects it from ubiquitin-independent degradation by the core 20S proteasome. Interacts with TP73 (via SAM domain); this interaction is NADH-dependent, stabilizes TP73 in response to oxidative stress and protects it from ubiquitin-independent degradation by the 20S proteasome. Interacts with TP53; this interaction is NADH-dependent, stabilizes TP53 in response to oxidative stress and protects it from ubiquitin-independent degradation by the 20S proteasome. FAD is required as a cofactor.

The protein localises to the cytoplasm. The protein resides in the cytosol. It carries out the reaction a quinone + NADH + H(+) = a quinol + NAD(+). It catalyses the reaction a quinone + NADPH + H(+) = a quinol + NADP(+). The catalysed reaction is ubiquinone-10 + NADH + H(+) = ubiquinol-10 + NAD(+). The enzyme catalyses menadione + NADH + H(+) = menadiol + NAD(+). Inhibited by dicoumarol. Functionally, flavin-containing quinone reductase that catalyzes two-electron reduction of quinones to hydroquinones using either NADH or NADPH as electron donors. In a ping-pong kinetic mechanism, the electrons are sequentially transferred from NAD(P)H to flavin cofactor and then from reduced flavin to the quinone, bypassing the formation of semiquinone and reactive oxygen species. Regulates cellular redox state primarily through quinone detoxification. Reduces components of plasma membrane redox system such as coenzyme Q and vitamin quinones, producing antioxidant hydroquinone forms. In the process may function as superoxide scavenger to prevent hydroquinone oxidation and facilitate excretion. Alternatively, can activate quinones and their derivatives by generating redox reactive hydroquinones with DNA cross-linking antitumor potential. Acts as a gatekeeper of the core 20S proteasome known to degrade proteins with unstructured regions. Upon oxidative stress, interacts with tumor suppressors TP53 and TP73 in a NADH-dependent way and inhibits their ubiquitin-independent degradation by the 20S proteasome. The sequence is that of NAD(P)H dehydrogenase [quinone] 1 from Homo sapiens (Human).